We begin with the raw amino-acid sequence, 464 residues long: Argininosuccinate lyase (464 aa).

Ala2 bears the N-acetylalanine mark. At Lys7 the chain carries N6-acetyllysine. Ser27 is a 2-(N(omega)-L-arginino)succinate binding site. The residue at position 69 (Lys69) is an N6-acetyllysine. Residues Asn114 and Thr159 each coordinate 2-(N(omega)-L-arginino)succinate. His160 serves as the catalytic Proton acceptor. Ser281 (proton donor) is an active-site residue. Lys288 bears the N6-acetyllysine mark. 2-(N(omega)-L-arginino)succinate is bound by residues Asn289, Tyr321, Gln326, and Lys329.

The protein belongs to the lyase 1 family. Argininosuccinate lyase subfamily. Homotetramer. Forms tissue-specific complexes with ASS1, SLC7A1, HSP90AA1 and nitric oxide synthase NOS1, NOS2 or NOS3; the complex maintenance is independent of ASL catalytic function. In terms of processing, acetylation modifies enzyme activity in response to alterations of extracellular nutrient availability. Acetylation increased with trichostin A (TSA) or with nicotinamide (NAM). Glucose increases acetylation by about a factor of 3 with decreasing enzyme activity. Acetylation on Lys-288 is decreased on the addition of extra amino acids resulting in activation of enzyme activity.

It carries out the reaction 2-(N(omega)-L-arginino)succinate = fumarate + L-arginine. The protein operates within amino-acid biosynthesis; L-arginine biosynthesis; L-arginine from L-ornithine and carbamoyl phosphate: step 3/3. Its pathway is nitrogen metabolism; urea cycle; L-arginine and fumarate from (N(omega)-L-arginino)succinate: step 1/1. Its activity is regulated as follows. Enzyme activity is regulated by acetylation. Catalyzes the reversible cleavage of L-argininosuccinate to fumarate and L-arginine, an intermediate step reaction in the urea cycle mostly providing for hepatic nitrogen detoxification into excretable urea as well as de novo L-arginine synthesis in nonhepatic tissues. Essential regulator of intracellular and extracellular L-arginine pools. As part of citrulline-nitric oxide cycle, forms tissue-specific multiprotein complexes with argininosuccinate synthase ASS1, transport protein SLC7A1 and nitric oxide synthase NOS1, NOS2 or NOS3, allowing for cell-autonomous L-arginine synthesis while channeling extracellular L-arginine to nitric oxide synthesis pathway. The sequence is that of Argininosuccinate lyase (ASL) from Macaca fascicularis (Crab-eating macaque).